Consider the following 483-residue polypeptide: FAD-linked oxidoreductase easE (483 aa).

Residues 10-193 (QGRLPFYSAV…TEATVRVFSD (184 aa)) enclose the FAD-binding PCMH-type domain.

Belongs to the oxygen-dependent FAD-linked oxidoreductase family. It depends on FAD as a cofactor.

It functions in the pathway alkaloid biosynthesis; ergot alkaloid biosynthesis. FAD-linked oxidoreductase; part of the gene cluster that mediates the biosynthesis of fungal ergot alkaloid. DmaW catalyzes the first step of ergot alkaloid biosynthesis by condensing dimethylallyl diphosphate (DMAP) and tryptophan to form 4-dimethylallyl-L-tryptophan. The second step is catalyzed by the methyltransferase easF that methylates 4-dimethylallyl-L-tryptophan in the presence of S-adenosyl-L-methionine, resulting in the formation of 4-dimethylallyl-L-abrine. The catalase easC and the FAD-dependent oxidoreductase easE then transform 4-dimethylallyl-L-abrine to chanoclavine-I which is further oxidized by easD in the presence of NAD(+), resulting in the formation of chanoclavine-I aldehyde. Agroclavine dehydrogenase easG then mediates the conversion of chanoclavine-I aldehyde to agroclavine via a non-enzymatic adduct reaction: the substrate is an iminium intermediate that is formed spontaneously from chanoclavine-I aldehyde in the presence of glutathione. The presence of easA is not required to complete this reaction. Further conversion of agroclavine to paspalic acid is a two-step process involving oxidation of agroclavine to elymoclavine and of elymoclavine to paspalic acid, the second step being performed by the elymoclavine oxidase cloA. Paspalic acid is then further converted to D-lysergic acid. Ergopeptines are assembled from D-lysergic acid and three different amino acids by the D-lysergyl-peptide-synthetases composed each of a monomudular and a trimodular nonribosomal peptide synthetase subunit. LpsB and lpsC encode the monomodular subunits responsible for D-lysergic acid activation and incorporation into the ergopeptine backbone. LpsA1 and A2 subunits encode the trimodular nonribosomal peptide synthetase assembling the tripeptide portion of ergopeptines. LpsA1 is responsible for formation of the major ergopeptine, ergotamine, and lpsA2 for alpha-ergocryptine, the minor ergopeptine of the total alkaloid mixture elaborated by C.purpurea. D-lysergyl-tripeptides are assembled by the nonribosomal peptide synthetases and released as N-(D-lysergyl-aminoacyl)-lactams. Cyclolization of the D-lysergyl-tripeptides is performed by the Fe(2+)/2-ketoglutarate-dependent dioxygenase easH which introduces a hydroxyl group into N-(D-lysergyl-aminoacyl)-lactam at alpha-C of the aminoacyl residue followed by spontaneous condensation with the terminal lactam carbonyl group. The protein is FAD-linked oxidoreductase easE of Claviceps purpurea (strain 20.1) (Ergot fungus).